A 664-amino-acid polypeptide reads, in one-letter code: Fructose-1,6-bisphosphatase class 3 (664 aa).

The protein belongs to the FBPase class 3 family. Mn(2+) is required as a cofactor.

The enzyme catalyses beta-D-fructose 1,6-bisphosphate + H2O = beta-D-fructose 6-phosphate + phosphate. The protein operates within carbohydrate biosynthesis; gluconeogenesis. This is Fructose-1,6-bisphosphatase class 3 from Bacteroides thetaiotaomicron (strain ATCC 29148 / DSM 2079 / JCM 5827 / CCUG 10774 / NCTC 10582 / VPI-5482 / E50).